A 75-amino-acid chain; its full sequence is MSLFYRAVALGTLSALVWYSTSILAEINENSCSSSSVDHEDCEEPDEIVREEQDYRALLAFSLVICGTLLVTCVI.

The N-terminal stretch at 1–25 (MSLFYRAVALGTLSALVWYSTSILA) is a signal peptide. Residues 55–75 (YRALLAFSLVICGTLLVTCVI) form a helical membrane-spanning segment.

The protein resides in the host endoplasmic reticulum membrane. In terms of biological role, plays a role in the down-regulation of the host NKG2D ligand MICA by targeting ER-resident MICA to proteasomal degradation prior to the GPI-anchoring step. In turn, MICA reduction diminishes NK-cell killing of HCMV-infected cells. This is an uncharacterized protein from Homo sapiens (Human).